Here is a 289-residue protein sequence, read N- to C-terminus: Protease HtpX (289 aa).

2 helical membrane passes run 5–25 (IVLFAITNLAVLILASIVMSL) and 33–53 (MSGLLVMALILGFGGSLISLL). His-140 lines the Zn(2+) pocket. Glu-141 is a catalytic residue. Residue His-144 participates in Zn(2+) binding. A run of 2 helical transmembrane segments spans residues 155-175 (LLQGVLNTFVIVLARVVGGFI) and 193-213 (GIVLVLELLFGLFATIITMWF). Glu-218 contributes to the Zn(2+) binding site.

Belongs to the peptidase M48B family. The cofactor is Zn(2+).

It is found in the cell inner membrane. The sequence is that of Protease HtpX from Xylella fastidiosa (strain M12).